We begin with the raw amino-acid sequence, 226 residues long: Thiamine-phosphate synthase (226 aa).

Residues 46–50 and asparagine 87 contribute to the 4-amino-2-methyl-5-(diphosphooxymethyl)pyrimidine site; that span reads QLRDK. 2 residues coordinate Mg(2+): aspartate 88 and aspartate 107. Serine 126 provides a ligand contact to 4-amino-2-methyl-5-(diphosphooxymethyl)pyrimidine. 152-154 is a binding site for 2-[(2R,5Z)-2-carboxy-4-methylthiazol-5(2H)-ylidene]ethyl phosphate; the sequence is TPT. Lysine 155 contributes to the 4-amino-2-methyl-5-(diphosphooxymethyl)pyrimidine binding site. Glycine 183 lines the 2-[(2R,5Z)-2-carboxy-4-methylthiazol-5(2H)-ylidene]ethyl phosphate pocket.

The protein belongs to the thiamine-phosphate synthase family. Mg(2+) serves as cofactor.

The enzyme catalyses 2-[(2R,5Z)-2-carboxy-4-methylthiazol-5(2H)-ylidene]ethyl phosphate + 4-amino-2-methyl-5-(diphosphooxymethyl)pyrimidine + 2 H(+) = thiamine phosphate + CO2 + diphosphate. It carries out the reaction 2-(2-carboxy-4-methylthiazol-5-yl)ethyl phosphate + 4-amino-2-methyl-5-(diphosphooxymethyl)pyrimidine + 2 H(+) = thiamine phosphate + CO2 + diphosphate. It catalyses the reaction 4-methyl-5-(2-phosphooxyethyl)-thiazole + 4-amino-2-methyl-5-(diphosphooxymethyl)pyrimidine + H(+) = thiamine phosphate + diphosphate. It participates in cofactor biosynthesis; thiamine diphosphate biosynthesis; thiamine phosphate from 4-amino-2-methyl-5-diphosphomethylpyrimidine and 4-methyl-5-(2-phosphoethyl)-thiazole: step 1/1. Condenses 4-methyl-5-(beta-hydroxyethyl)thiazole monophosphate (THZ-P) and 2-methyl-4-amino-5-hydroxymethyl pyrimidine pyrophosphate (HMP-PP) to form thiamine monophosphate (TMP). In Mycobacterium sp. (strain JLS), this protein is Thiamine-phosphate synthase.